The chain runs to 102 residues: uncharacterized protein (102 aa).

2 consecutive transmembrane segments (helical) span residues 24–44 (AFIV…PVLT) and 55–75 (IGAV…TWIL).

It is found in the cell membrane. This is an uncharacterized protein from Bacillus subtilis (strain 168).